Reading from the N-terminus, the 171-residue chain is uncharacterized protein (171 aa).

Positions 3 to 171 (KKVAIILANE…FNREIVKQLQ (169 aa)) constitute a PfpI endopeptidase domain.

It belongs to the peptidase C56 family.

This is an uncharacterized protein from Staphylococcus aureus (strain COL).